The following is a 2155-amino-acid chain: Polyketide synthase 2 (2155 aa).

Residues Phe-7–His-244 form an N-terminal acylcarrier protein transacylase domain (SAT) region. Residues Asp-374 to Asp-807 form the Ketosynthase family 3 (KS3) domain. Active-site for beta-ketoacyl synthase activity residues include Cys-546, His-681, and His-723. Residues Gly-908–Trp-1213 form a malonyl-CoA:ACP transacylase (MAT) domain region. Residue Ser-998 is the For acyl/malonyl transferase activity of the active site. The interval Thr-1290 to Pro-1605 is product template (PT) domain. Residues Gln-1294 to Ser-1428 are N-terminal hotdog fold. The PKS/mFAS DH domain maps to Gln-1294–Asn-1600. Catalysis depends on His-1327, which acts as the Proton acceptor; for dehydratase activity. Positions Thr-1455–Asn-1600 are C-terminal hotdog fold. Catalysis depends on Asp-1514, which acts as the Proton donor; for dehydratase activity. The disordered stretch occupies residues Ala-1626–Thr-1654. The segment covering Ala-1643 to Thr-1654 has biased composition (polar residues). A Carrier 1 domain is found at Ser-1649–Gln-1726. Residue Ser-1686 is modified to O-(pantetheine 4'-phosphoryl)serine. A disordered region spans residues Ser-1735–Thr-1765. The span at Ser-1736 to Lys-1756 shows a compositional bias: polar residues. The region spanning Asp-1764–Glu-1838 is the Carrier 2 domain. Ser-1798 is subject to O-(pantetheine 4'-phosphoryl)serine. Positions Ala-1873–Asp-2149 are thioesterase (TE) domain. Ser-1979 serves as the catalytic For thioesterase activity.

Polyketide synthase; part of the Pks2 gene cluster that mediates the formation of infectious structures (appressoria), enabling these fungi to kill insects faster. The product of the Pks2 gene cluster is different from the one of Pks1 and has still not been identified. In Metarhizium anisopliae (strain ARSEF 549), this protein is Polyketide synthase 2.